We begin with the raw amino-acid sequence, 550 residues long: MTVQSKLQGRGKFKKRFFRAGQQVPRPTLELSSVWLSKIFYNPEQHHNKQKMIESGITTRMSGIHENPGQSHHTSAQDYRLLTTDPSQLKDELPGDLQSLSWLTSVDVPRLQQIGGGRPDFTSSAQSSLLERQTAQLNSMTVAGGAGSAIHLQSEMQHSPLAINSMPQFSPGFPCAASVYQTAPQQVLTFTQANQQCSPGGLYGNYNSQNLFPQPRITAHSQDLQPKCFPKPIYSYSCLIAMALKNSKTGSLPVSEIYSFMKEHFPYFKTAPDGWKNSVRHNLSLNKCFEKVENKMSGSSRKGCLWALNPAKIDKMEEEMQKWKRKDLPAIRRSMANPDELDKLITDRPESCRQKSVDPGMTRLPSCPPGQTLPLAAQMQPQPVVTLSLQCLPMHQHLQLQLQNQSRLAPSSPAPAQTPPLHTVPDMTNSSLPQHPAKQHTDFYTVHTDVNSEVDALDPSIMDFAWQGNLWEEMKDDSFNLEALGTLSNSPLRLSDCDLDTSSVTPVSSAGGLPYPDLQVTGLYSSYSAIDALSNQYMNTQGGTKPIVLL.

The fork-head DNA-binding region spans 231-327 (KPIYSYSCLI…EEMQKWKRKD (97 aa)). The segment covering 402–411 (LQNQSRLAPS) has biased composition (low complexity). The disordered stretch occupies residues 402–437 (LQNQSRLAPSSPAPAQTPPLHTVPDMTNSSLPQHPA).

As to expression, isoform 1 is expressed mainly in adult thymus. Isoform 2 is detected in adult skin. Isoform 3 is expressed in adult brain and embryo. Prominent expression sites include the olfactory placode, the basal layer of the olfactory epithelium, the neuroepithelium of the developing retina, the germinal zone of the differentiated eye, regions of motoneuron development in the neural tube and periventricular regions of the brain.

It is found in the nucleus. Its function is as follows. Transcription factor essential for neural and some non-neural tissues development. Binds to an 11-bp consensus sequence containing the invariant tetranucleotide 5'-ACGC-3'. During development of the central nervous system, required to specify the amacrine and horizontal cell fates from multipotent retinal progenitors while suppressing the alternative photoreceptor cell fates. Drives commitment of p2 progenitors to the V2b interneuron fates during spinal cord neurogenesis. In development of non-neural tissues, plays an essential role in the specification of the atrioventricular canal. The protein is Forkhead box protein N4 (foxn4) of Danio rerio (Zebrafish).